The chain runs to 168 residues: DNA damage-inducible transcript 3 protein (168 aa).

An interaction with TRIB3 region spans residues 10 to 18; that stretch reads LETVSSWEL. Residues 10 to 26 are N-terminal; sequence LETVSSWELEAWYEDLQ. Phosphoserine; by CK2 occurs at positions 14, 15, 30, and 31. Positions 30 to 43 are enriched in polar residues; sequence SSDENGGPYSSSLG. The interval 30–168 is disordered; the sequence is SSDENGGPYS…DRPHVNLQQV (139 aa). Residues 74–87 show a composition bias toward low complexity; it reads SSSQSPRSPDSSQS. A phosphoserine; by MAPK14 mark is found at S78 and S81. Residues 98–161 enclose the bZIP domain; sequence GRTRKRKQSG…EATRPGSDRP (64 aa). Residues 101-129 are basic motif; that stretch reads RKRKQSGQCPARGTGKQRMKEKEQENERK. Residues 118–162 are compositionally biased toward basic and acidic residues; that stretch reads RMKEKEQENERKVAQLAEENERLKQEIERLTREVEATRPGSDRPH. The interval 133–147 is leucine-zipper; it reads LAEENERLKQEIERL.

Belongs to the bZIP family. In terms of assembly, heterodimer. Interacts with TCF7L2/TCF4, EP300/P300, HDAC1, HDAC5 and HDAC6. Interacts with TRIB3 which blocks its association with EP300/P300. Interacts with FOXO3, CEBPB and ATF4. In terms of processing, ubiquitinated, leading to its degradation by the proteasome. Post-translationally, phosphorylation at serine residues by MAPK14 enhances its transcriptional activation activity while phosphorylation at serine residues by CK2 inhibits its transcriptional activation activity.

The protein resides in the cytoplasm. It localises to the nucleus. Multifunctional transcription factor in ER stress response. Plays an essential role in the response to a wide variety of cell stresses and induces cell cycle arrest and apoptosis in response to ER stress. Plays a dual role both as an inhibitor of CCAAT/enhancer-binding protein (C/EBP) function and as an activator of other genes. Acts as a dominant-negative regulator of C/EBP-induced transcription: dimerizes with members of the C/EBP family, impairs their association with C/EBP binding sites in the promoter regions, and inhibits the expression of C/EBP regulated genes. Positively regulates the transcription of TRIB3, IL6, IL8, IL23, TNFRSF10B/DR5, PPP1R15A/GADD34, BBC3/PUMA, BCL2L11/BIM and ERO1L. Negatively regulates; expression of BCL2 and MYOD1, ATF4-dependent transcriptional activation of asparagine synthetase (ASNS), CEBPA-dependent transcriptional activation of hepcidin (HAMP) and CEBPB-mediated expression of peroxisome proliferator-activated receptor gamma (PPARG). Inhibits the canonical Wnt signaling pathway by binding to TCF7L2/TCF4, impairing its DNA-binding properties and repressing its transcriptional activity. Plays a regulatory role in the inflammatory response through the induction of caspase-11 (CASP4/CASP11) which induces the activation of caspase-1 (CASP1) and both these caspases increase the activation of pro-IL1B to mature IL1B which is involved in the inflammatory response. In Cricetulus griseus (Chinese hamster), this protein is DNA damage-inducible transcript 3 protein (DDIT3).